Here is a 146-residue protein sequence, read N- to C-terminus: Vascular endothelial growth factor isoform GtVF (146 aa).

The first 24 residues, 1–24, serve as a signal peptide directing secretion; the sequence is MAAYLLAVAILFCIQGWPSGTVQG. Pyrrolidone carboxylic acid is present on Gln-25. Cystine bridges form between Cys-38–Cys-80, Cys-69–Cys-115, and Cys-73–Cys-117. A disordered region spans residues 116 to 146; the sequence is ECRPRSRSGVDSGKRKRNPEEGEPRAKFPFV. Over residues 133-146 the composition is skewed to basic and acidic residues; sequence NPEEGEPRAKFPFV.

Belongs to the PDGF/VEGF growth factor family. Snake venom VEGF subfamily. As to quaternary structure, homodimer; disulfide-linked. As to expression, expressed by the venom gland.

The protein resides in the secreted. Functionally, snake venom VEGFs that may contribute to venom dispersion and prey subjugation by inducing vascular permeability and hypotension. This protein induces an increase in capillary permeability after intradermal injection, in a VEGFR-2 (KDR) dependent manner. In addition, it provokes a drastic hypotensive effect after intravenous injection. The hypotension is mediated by nitric oxide (NO), which is produced by VEGF-activated endothelium NO synthase. Also induces angiogenesis in vitro. Unlike other crotalid VEGFs, this protein probably interacts with VEGF receptor-2 (KDR). The protein is Vascular endothelial growth factor isoform GtVF of Gloydius tsushimaensis (Tsushima Island pitviper).